A 415-amino-acid chain; its full sequence is Gamma-glutamyl phosphate reductase (415 aa).

The protein belongs to the gamma-glutamyl phosphate reductase family.

The protein localises to the cytoplasm. It catalyses the reaction L-glutamate 5-semialdehyde + phosphate + NADP(+) = L-glutamyl 5-phosphate + NADPH + H(+). It participates in amino-acid biosynthesis; L-proline biosynthesis; L-glutamate 5-semialdehyde from L-glutamate: step 2/2. Its function is as follows. Catalyzes the NADPH-dependent reduction of L-glutamate 5-phosphate into L-glutamate 5-semialdehyde and phosphate. The product spontaneously undergoes cyclization to form 1-pyrroline-5-carboxylate. The polypeptide is Gamma-glutamyl phosphate reductase (Bacillus cereus (strain ATCC 10987 / NRS 248)).